We begin with the raw amino-acid sequence, 450 residues long: TATA box-binding protein-associated factor RNA polymerase I subunit A (450 aa).

Component of the transcription factor SL1/TIF-IB complex, composed of TBP and at least TAF1A, TAF1B, TAF1C and TAF1D. In the complex interacts directly with TBP, TAF1A and TAF1B. Interaction of the SL1/TIF-IB subunits with TBP excludes interaction of TBP with the transcription factor IID (TFIID) subunits. Interacts with UBFT. Interacts with CEBPA (isoform 1 and isoform 4). Part of Pol I pre-initiation complex (PIC), in which Pol I core assembles with RRN3 and promoter-bound UTBF and SL1/TIF-IB complex.

It is found in the nucleus. The protein localises to the nucleolus. Functionally, component of the transcription factor SL1/TIF-IB complex, which is involved in the assembly of the PIC (pre-initiation complex) during RNA polymerase I-dependent transcription. The rate of PIC formation probably is primarily dependent on the rate of association of SL1/TIF-IB with the rDNA promoter. SL1/TIF-IB is involved in stabilization of nucleolar transcription factor 1/UBTF on rDNA. Formation of SL1/TIF-IB excludes the association of TBP with TFIID subunits. In Homo sapiens (Human), this protein is TATA box-binding protein-associated factor RNA polymerase I subunit A (TAF1A).